The primary structure comprises 320 residues: Biotin synthase (320 aa).

The region spanning 39 to 267 is the Radical SAM core domain; the sequence is NAIQLATLLS…KARVRLSAGR (229 aa). Residues Cys54, Cys58, and Cys61 each contribute to the [4Fe-4S] cluster site. [2Fe-2S] cluster contacts are provided by Cys98, Cys130, Cys190, and Arg262.

The protein belongs to the radical SAM superfamily. Biotin synthase family. As to quaternary structure, homodimer. [4Fe-4S] cluster serves as cofactor. The cofactor is [2Fe-2S] cluster.

It carries out the reaction (4R,5S)-dethiobiotin + (sulfur carrier)-SH + 2 reduced [2Fe-2S]-[ferredoxin] + 2 S-adenosyl-L-methionine = (sulfur carrier)-H + biotin + 2 5'-deoxyadenosine + 2 L-methionine + 2 oxidized [2Fe-2S]-[ferredoxin]. Its pathway is cofactor biosynthesis; biotin biosynthesis; biotin from 7,8-diaminononanoate: step 2/2. In terms of biological role, catalyzes the conversion of dethiobiotin (DTB) to biotin by the insertion of a sulfur atom into dethiobiotin via a radical-based mechanism. The protein is Biotin synthase of Synechococcus elongatus (strain ATCC 33912 / PCC 7942 / FACHB-805) (Anacystis nidulans R2).